The following is a 359-amino-acid chain: tRNA-specific 2-thiouridylase MnmA (359 aa).

ATP is bound by residues 6-13 (AMSGGVDS) and L32. C101 (nucleophile) is an active-site residue. A disulfide bond links C101 and C193. Position 125 (G125) interacts with ATP. Residues 143-145 (KDQ) are interaction with tRNA. C193 functions as the Cysteine persulfide intermediate in the catalytic mechanism.

The protein belongs to the MnmA/TRMU family.

The protein resides in the cytoplasm. It carries out the reaction S-sulfanyl-L-cysteinyl-[protein] + uridine(34) in tRNA + AH2 + ATP = 2-thiouridine(34) in tRNA + L-cysteinyl-[protein] + A + AMP + diphosphate + H(+). Its function is as follows. Catalyzes the 2-thiolation of uridine at the wobble position (U34) of tRNA, leading to the formation of s(2)U34. The protein is tRNA-specific 2-thiouridylase MnmA of Mycobacterium sp. (strain KMS).